The primary structure comprises 508 residues: Photosystem II CP47 reaction center protein (508 aa).

The next 6 membrane-spanning stretches (helical) occupy residues 21–36, 101–115, 140–156, 203–218, 237–252, and 457–472; these read SVHIMHTALVAGWAGS, IMFSGLMFLAAIWHW, GIHLFLSGVACFGFGAF, IAAGILGILAGLFHLS, VLSSSIAAVFFAAFIV, and TFALLFFSGHIWHGAR.

It belongs to the PsbB/PsbC family. PsbB subfamily. In terms of assembly, PSII is composed of 1 copy each of membrane proteins PsbA, PsbB, PsbC, PsbD, PsbE, PsbF, PsbH, PsbI, PsbJ, PsbK, PsbL, PsbM, PsbT, PsbX, PsbY, PsbZ, Psb30/Ycf12, at least 3 peripheral proteins of the oxygen-evolving complex and a large number of cofactors. It forms dimeric complexes. It depends on Binds multiple chlorophylls. PSII binds additional chlorophylls, carotenoids and specific lipids. as a cofactor.

Its subcellular location is the plastid. The protein resides in the chloroplast thylakoid membrane. Functionally, one of the components of the core complex of photosystem II (PSII). It binds chlorophyll and helps catalyze the primary light-induced photochemical processes of PSII. PSII is a light-driven water:plastoquinone oxidoreductase, using light energy to abstract electrons from H(2)O, generating O(2) and a proton gradient subsequently used for ATP formation. This Pinus koraiensis (Korean pine) protein is Photosystem II CP47 reaction center protein.